We begin with the raw amino-acid sequence, 95 residues long: ATP-dependent Clp protease adapter protein ClpS (95 aa).

The protein belongs to the ClpS family. In terms of assembly, binds to the N-terminal domain of the chaperone ClpA.

Functionally, involved in the modulation of the specificity of the ClpAP-mediated ATP-dependent protein degradation. This chain is ATP-dependent Clp protease adapter protein ClpS, found in Synechococcus elongatus (strain ATCC 33912 / PCC 7942 / FACHB-805) (Anacystis nidulans R2).